The following is a 750-amino-acid chain: Photosystem I P700 chlorophyll a apoprotein A1 (750 aa).

Transmembrane regions (helical) follow at residues 70 to 93, 156 to 179, 195 to 219, 291 to 309, 346 to 369, 385 to 411, 433 to 455, and 531 to 549; these read VFSA…FHGA, LYST…FHYH, LNHH…HVSL, TVHH…GHMY, WHAQ…HHMY, LSLF…IFMV, AIVS…LYIH, and FLVH…LILL. Cys573 and Cys582 together coordinate [4Fe-4S] cluster. The next 2 membrane-spanning stretches (helical) occupy residues 589-610 and 664-686; these read HVFL…HFSW and LSAY…MFLF. His675 contributes to the chlorophyll a' binding site. Met683 and Tyr691 together coordinate chlorophyll a. Residue Trp692 coordinates phylloquinone. Residues 724-744 form a helical membrane-spanning segment; it reads AVGVAHYLLGGIATTWAFFLA.

It belongs to the PsaA/PsaB family. In terms of assembly, the PsaA/B heterodimer binds the P700 chlorophyll special pair and subsequent electron acceptors. PSI consists of a core antenna complex that captures photons, and an electron transfer chain that converts photonic excitation into a charge separation. The eukaryotic PSI reaction center is composed of at least 11 subunits. It depends on P700 is a chlorophyll a/chlorophyll a' dimer, A0 is one or more chlorophyll a, A1 is one or both phylloquinones and FX is a shared 4Fe-4S iron-sulfur center. as a cofactor.

The protein resides in the plastid. Its subcellular location is the chloroplast thylakoid membrane. The enzyme catalyses reduced [plastocyanin] + hnu + oxidized [2Fe-2S]-[ferredoxin] = oxidized [plastocyanin] + reduced [2Fe-2S]-[ferredoxin]. In terms of biological role, psaA and PsaB bind P700, the primary electron donor of photosystem I (PSI), as well as the electron acceptors A0, A1 and FX. PSI is a plastocyanin-ferredoxin oxidoreductase, converting photonic excitation into a charge separation, which transfers an electron from the donor P700 chlorophyll pair to the spectroscopically characterized acceptors A0, A1, FX, FA and FB in turn. Oxidized P700 is reduced on the lumenal side of the thylakoid membrane by plastocyanin. The polypeptide is Photosystem I P700 chlorophyll a apoprotein A1 (Huperzia lucidula (Shining clubmoss)).